A 251-amino-acid chain; its full sequence is 5'-nucleotidase SurE (251 aa).

Asp8, Asp9, Ser40, and Asn95 together coordinate a divalent metal cation.

The protein belongs to the SurE nucleotidase family. It depends on a divalent metal cation as a cofactor.

It is found in the cytoplasm. The catalysed reaction is a ribonucleoside 5'-phosphate + H2O = a ribonucleoside + phosphate. Functionally, nucleotidase that shows phosphatase activity on nucleoside 5'-monophosphates. The protein is 5'-nucleotidase SurE of Maridesulfovibrio salexigens (strain ATCC 14822 / DSM 2638 / NCIMB 8403 / VKM B-1763) (Desulfovibrio salexigens).